The following is a 420-amino-acid chain: Phosphoglycerate kinase (420 aa).

(2R)-3-phosphoglycerate is bound by residues Val-24, Asp-25, Phe-26, Asn-27, Arg-40, Ser-63, His-64, Gly-66, Arg-67, Leu-122, Arg-123, His-170, and Arg-171. Residue Gly-214 participates in ADP binding. Gly-214 serves as a coordination point for CDP. The AMP site is built by Ala-215 and Lys-216. Ala-215 is a binding site for ATP. Position 215 (Ala-215) interacts with Mg(2+). Asp-219 lines the CDP pocket. Mg(2+) is bound at residue Asp-219. Lys-220 is an AMP binding site. Lys-220 serves as a coordination point for ATP. Gly-238 contacts ADP. Position 238 (Gly-238) interacts with CDP. 2 residues coordinate AMP: Gly-239 and Gly-313. ATP-binding residues include Gly-239 and Gly-313. CDP-binding residues include Gly-338 and Phe-343. Phe-343 contacts ADP. Glu-344 is an AMP binding site. ATP is bound by residues Glu-344, Asp-375, and Thr-376. Asp-375 serves as a coordination point for Mg(2+).

The protein belongs to the phosphoglycerate kinase family. Monomer. Mg(2+) serves as cofactor.

The catalysed reaction is (2R)-3-phosphoglycerate + ATP = (2R)-3-phospho-glyceroyl phosphate + ADP. The protein operates within carbohydrate degradation; glycolysis; pyruvate from D-glyceraldehyde 3-phosphate: step 2/5. The sequence is that of Phosphoglycerate kinase (PGK) from Tetrahymena thermophila.